A 245-amino-acid chain; its full sequence is DNA polymerase sliding clamp (245 aa).

It belongs to the PCNA family. In terms of assembly, homotrimer. The subunits circularize to form a toroid; DNA passes through its center. Replication factor C (RFC) is required to load the toroid on the DNA.

Functionally, sliding clamp subunit that acts as a moving platform for DNA processing. Responsible for tethering the catalytic subunit of DNA polymerase and other proteins to DNA during high-speed replication. The sequence is that of DNA polymerase sliding clamp from Picrophilus torridus (strain ATCC 700027 / DSM 9790 / JCM 10055 / NBRC 100828 / KAW 2/3).